We begin with the raw amino-acid sequence, 244 residues long: 14-3-3 protein beta/alpha-1 (244 aa).

An N-acetylmethionine modification is found at methionine 1.

It belongs to the 14-3-3 family. In terms of assembly, homodimer, and heterodimer with other family members. As to expression, expressed in brain, gill, heart, intestine, kidney, liver, ovary, skin, spleen and testis.

Its subcellular location is the cytoplasm. In terms of biological role, adapter protein implicated in the regulation of a large spectrum of both general and specialized signaling pathways. Binds to a large number of partners, usually by recognition of a phosphoserine or phosphothreonine motif. Binding generally results in the modulation of the activity of the binding partner. This is 14-3-3 protein beta/alpha-1 from Oncorhynchus mykiss (Rainbow trout).